We begin with the raw amino-acid sequence, 252 residues long: Fructose-1,6-bisphosphatase/inositol-1-monophosphatase (252 aa).

Positions 65, 81, 83, and 84 each coordinate Mg(2+). Substrate-binding positions include 84–86 (DGS), R170, F175, and R194. Residue D201 coordinates Mg(2+).

The protein belongs to the inositol monophosphatase superfamily. FBPase class 4 family. As to quaternary structure, homodimer. The cofactor is Mg(2+).

The catalysed reaction is beta-D-fructose 1,6-bisphosphate + H2O = beta-D-fructose 6-phosphate + phosphate. The enzyme catalyses a myo-inositol phosphate + H2O = myo-inositol + phosphate. IMPase activity is inhibited by Ca(2+) and Zn(2+). In contrast to mammalian I-1-P phosphatases, is not inhibited by Li(+) up to 100 mM. Phosphatase with broad specificity; it can dephosphorylate fructose 1,6-bisphosphate, both D and L isomers of inositol-1-phosphate (I-1-P), 2'-AMP, pNPP, beta-glycerol phosphate, and alpha-D-glucose-1-phosphate. Cannot hydrolyze glucose-6-phosphate, fructose-6-phosphate, NAD(+) or 5'-AMP. May be involved in the biosynthesis of a unique osmolyte, di-myo-inositol 1,1-phosphate. The chain is Fructose-1,6-bisphosphatase/inositol-1-monophosphatase (suhB) from Methanocaldococcus jannaschii (strain ATCC 43067 / DSM 2661 / JAL-1 / JCM 10045 / NBRC 100440) (Methanococcus jannaschii).